The following is a 624-amino-acid chain: Translocator protein BipB (624 aa).

The disordered stretch occupies residues 54 to 99; sequence LASEQCDAQPVTDDARLDRLDDKPALRAPRSDAAHAADGNARGNGG. The segment covering 66 to 88 has biased composition (basic and acidic residues); sequence DDARLDRLDDKPALRAPRSDAAH. The stretch at 313–343 forms a coiled coil; sequence EMQAKREAELQKKSDEYQEQVKKAEEMQKTM. A run of 3 helical transmembrane segments spans residues 359 to 379, 405 to 425, and 434 to 454; these read FAAAAFTGGASLALAAVGLAL, AILKPLMEVISSLITKALVAC, and LAGAILGAVVTGVALVAAAFV.

The protein belongs to the SctE/SipB/YopB family.

The protein resides in the secreted. The protein localises to the host membrane. Functionally, plays a role in the bacterium-induced formation of multinucleated giant cell (MNGC), which is formed after host cell fusion, as well as in the intercellular spreading of bacteria and in the induction of apoptosis in macrophages. May act in concert with other effector proteins to induce fusion of host cell membranes. This Burkholderia thailandensis (strain ATCC 700388 / DSM 13276 / CCUG 48851 / CIP 106301 / E264) protein is Translocator protein BipB (bipB).